A 258-amino-acid polypeptide reads, in one-letter code: Phosphonates import ATP-binding protein PhnC 3 (258 aa).

One can recognise an ABC transporter domain in the interval 2 to 246 (IEFKNVSLVY…TFEEIYGRKI (245 aa)). An ATP-binding site is contributed by 35–42 (GLSGAGKS).

Belongs to the ABC transporter superfamily. Phosphonates importer (TC 3.A.1.9.1) family. As to quaternary structure, the complex is composed of two ATP-binding proteins (PhnC), two transmembrane proteins (PhnE) and a solute-binding protein (PhnD).

It is found in the cell membrane. It catalyses the reaction phosphonate(out) + ATP + H2O = phosphonate(in) + ADP + phosphate + H(+). Part of the ABC transporter complex PhnCDE involved in phosphonates import. Responsible for energy coupling to the transport system. This Halalkalibacterium halodurans (strain ATCC BAA-125 / DSM 18197 / FERM 7344 / JCM 9153 / C-125) (Bacillus halodurans) protein is Phosphonates import ATP-binding protein PhnC 3.